We begin with the raw amino-acid sequence, 695 residues long: Polyribonucleotide nucleotidyltransferase (695 aa).

Aspartate 486 and aspartate 492 together coordinate Mg(2+). One can recognise a KH domain in the interval proline 553–isoleucine 612. The region spanning glycine 622–lysine 690 is the S1 motif domain.

This sequence belongs to the polyribonucleotide nucleotidyltransferase family. The cofactor is Mg(2+).

The protein resides in the cytoplasm. The catalysed reaction is RNA(n+1) + phosphate = RNA(n) + a ribonucleoside 5'-diphosphate. Its function is as follows. Involved in mRNA degradation. Catalyzes the phosphorolysis of single-stranded polyribonucleotides processively in the 3'- to 5'-direction. The polypeptide is Polyribonucleotide nucleotidyltransferase (Chlamydia trachomatis serovar L2 (strain ATCC VR-902B / DSM 19102 / 434/Bu)).